Here is a 472-residue protein sequence, read N- to C-terminus: Phosphoglucosamine mutase (472 aa).

Residue Ser123 is the Phosphoserine intermediate of the active site. Mg(2+) is bound by residues Ser123, Asp262, Asp264, and Asp266. Ser123 is modified (phosphoserine).

This sequence belongs to the phosphohexose mutase family. The cofactor is Mg(2+). In terms of processing, activated by phosphorylation.

The catalysed reaction is alpha-D-glucosamine 1-phosphate = D-glucosamine 6-phosphate. Catalyzes the conversion of glucosamine-6-phosphate to glucosamine-1-phosphate. This chain is Phosphoglucosamine mutase, found in Synechococcus elongatus (strain ATCC 33912 / PCC 7942 / FACHB-805) (Anacystis nidulans R2).